The following is a 476-amino-acid chain: Cytosolic iron-sulfur assembly component 3 (476 aa).

Ala-2 is subject to N-acetylalanine. Residues Cys-24, Cys-71, Cys-74, Cys-77, Cys-190, Cys-246, Cys-395, and Cys-399 each coordinate [4Fe-4S] cluster.

This sequence belongs to the NARF family. External component of the CIA complex. In the CIA complex, interacts directly with CIAO1 and MMS19.

In terms of biological role, component of the cytosolic iron-sulfur protein assembly (CIA) complex, a multiprotein complex that mediates the incorporation of iron-sulfur cluster into extramitochondrial Fe/S proteins. Seems to negatively regulate the level of HIF1A expression, although this effect could be indirect. The sequence is that of Cytosolic iron-sulfur assembly component 3 from Rattus norvegicus (Rat).